Here is a 598-residue protein sequence, read N- to C-terminus: Elongation factor 4 (598 aa).

A tr-type G domain is found at 4-185 (KNIRNFSIIA…TIITKIPAPK (182 aa)). Residues 16-21 (DHGKST) and 132-135 (NKID) contribute to the GTP site.

It belongs to the TRAFAC class translation factor GTPase superfamily. Classic translation factor GTPase family. LepA subfamily.

It is found in the cell inner membrane. The enzyme catalyses GTP + H2O = GDP + phosphate + H(+). Functionally, required for accurate and efficient protein synthesis under certain stress conditions. May act as a fidelity factor of the translation reaction, by catalyzing a one-codon backward translocation of tRNAs on improperly translocated ribosomes. Back-translocation proceeds from a post-translocation (POST) complex to a pre-translocation (PRE) complex, thus giving elongation factor G a second chance to translocate the tRNAs correctly. Binds to ribosomes in a GTP-dependent manner. The polypeptide is Elongation factor 4 (Campylobacter jejuni subsp. jejuni serotype O:2 (strain ATCC 700819 / NCTC 11168)).